Here is a 372-residue protein sequence, read N- to C-terminus: Bifunctional enzyme IspD/IspF (372 aa).

The tract at residues M1 to I210 is 2-C-methyl-D-erythritol 4-phosphate cytidylyltransferase. A 2-C-methyl-D-erythritol 2,4-cyclodiphosphate synthase region spans residues F211–L372. Residues D217 and H219 each coordinate a divalent metal cation. 4-CDP-2-C-methyl-D-erythritol 2-phosphate-binding positions include D217–H219 and H243–S244. H251 contacts a divalent metal cation. 4-CDP-2-C-methyl-D-erythritol 2-phosphate is bound by residues D265–G267, Y270–D274, T341–E344, F348, and R351.

It in the N-terminal section; belongs to the IspD/TarI cytidylyltransferase family. IspD subfamily. This sequence in the C-terminal section; belongs to the IspF family. A divalent metal cation serves as cofactor.

The catalysed reaction is 2-C-methyl-D-erythritol 4-phosphate + CTP + H(+) = 4-CDP-2-C-methyl-D-erythritol + diphosphate. It carries out the reaction 4-CDP-2-C-methyl-D-erythritol 2-phosphate = 2-C-methyl-D-erythritol 2,4-cyclic diphosphate + CMP. The protein operates within isoprenoid biosynthesis; isopentenyl diphosphate biosynthesis via DXP pathway; isopentenyl diphosphate from 1-deoxy-D-xylulose 5-phosphate: step 2/6. It functions in the pathway isoprenoid biosynthesis; isopentenyl diphosphate biosynthesis via DXP pathway; isopentenyl diphosphate from 1-deoxy-D-xylulose 5-phosphate: step 4/6. Its function is as follows. Bifunctional enzyme that catalyzes the formation of 4-diphosphocytidyl-2-C-methyl-D-erythritol from CTP and 2-C-methyl-D-erythritol 4-phosphate (MEP) (IspD), and catalyzes the conversion of 4-diphosphocytidyl-2-C-methyl-D-erythritol 2-phosphate (CDP-ME2P) to 2-C-methyl-D-erythritol 2,4-cyclodiphosphate (ME-CPP) with a corresponding release of cytidine 5-monophosphate (CMP) (IspF). The polypeptide is Bifunctional enzyme IspD/IspF (Campylobacter fetus subsp. fetus (strain 82-40)).